We begin with the raw amino-acid sequence, 199 residues long: MHKHYHQAKFLLSCPSLKGCPPDEGYEVIFAGRSNAGKSSVINTLTLQNKLAKVSRTPGKTQHFVFFELDKDRRLVDLPGYGYAKVPKRVKTKWHKDINEYFNKRDCLRGTVLVMDIRHPFKLFDQMVLNWCHSINLSTQIILTKSDKLKKGAASNTYLKVHNQIKKYPYVDVQLFSSLKKQGLEILGARLNTFFGYVD.

An EngB-type G domain is found at 24 to 197 (EGYEVIFAGR…GARLNTFFGY (174 aa)). GTP contacts are provided by residues 32-39 (GRSNAGKS), 59-63 (GKTQH), 77-80 (DLPG), 144-147 (TKSD), and 176-178 (FSS). Mg(2+)-binding residues include Ser39 and Thr61.

The protein belongs to the TRAFAC class TrmE-Era-EngA-EngB-Septin-like GTPase superfamily. EngB GTPase family. Requires Mg(2+) as cofactor.

In terms of biological role, necessary for normal cell division and for the maintenance of normal septation. This Ruthia magnifica subsp. Calyptogena magnifica protein is Probable GTP-binding protein EngB.